The following is a 259-amino-acid chain: Type III pantothenate kinase (259 aa).

6–13 (DIGNTNIT) provides a ligand contact to ATP. 113–116 (GADR) is a substrate binding site. Asp-115 (proton acceptor) is an active-site residue. Asp-135 is a K(+) binding site. Thr-138 provides a ligand contact to ATP. Thr-190 contacts substrate.

It belongs to the type III pantothenate kinase family. In terms of assembly, homodimer. It depends on NH4(+) as a cofactor. K(+) is required as a cofactor.

The protein resides in the cytoplasm. It catalyses the reaction (R)-pantothenate + ATP = (R)-4'-phosphopantothenate + ADP + H(+). It functions in the pathway cofactor biosynthesis; coenzyme A biosynthesis; CoA from (R)-pantothenate: step 1/5. Functionally, catalyzes the phosphorylation of pantothenate (Pan), the first step in CoA biosynthesis. This Endomicrobium trichonymphae protein is Type III pantothenate kinase.